Reading from the N-terminus, the 51-residue chain is Defensin-like protein 1 (51 aa).

Glutamine 1 is modified (pyrrolidone carboxylic acid). 4 disulfides stabilise this stretch: cysteine 4–cysteine 51, cysteine 15–cysteine 36, cysteine 21–cysteine 45, and cysteine 25–cysteine 47.

As to quaternary structure, forms oligomers in its native state.

Possesses antifungal activity sensitive to inorganic cations. This Sinapis alba (White mustard) protein is Defensin-like protein 1.